The primary structure comprises 495 residues: Glycerol kinase (495 aa).

Thr11 contributes to the ADP binding site. ATP contacts are provided by Thr11, Thr12, and Ser13. Thr11 contacts sn-glycerol 3-phosphate. An ADP-binding site is contributed by Arg15. The sn-glycerol 3-phosphate site is built by Arg81, Glu82, Tyr133, and Asp242. Residues Arg81, Glu82, Tyr133, Asp242, and Gln243 each contribute to the glycerol site. The ADP site is built by Thr264 and Gly307. Positions 264, 307, 311, and 408 each coordinate ATP. Gly408 and Asn412 together coordinate ADP.

The protein belongs to the FGGY kinase family.

It carries out the reaction glycerol + ATP = sn-glycerol 3-phosphate + ADP + H(+). Its pathway is polyol metabolism; glycerol degradation via glycerol kinase pathway; sn-glycerol 3-phosphate from glycerol: step 1/1. Its activity is regulated as follows. Inhibited by fructose 1,6-bisphosphate (FBP). Key enzyme in the regulation of glycerol uptake and metabolism. Catalyzes the phosphorylation of glycerol to yield sn-glycerol 3-phosphate. This Citrifermentans bemidjiense (strain ATCC BAA-1014 / DSM 16622 / JCM 12645 / Bem) (Geobacter bemidjiensis) protein is Glycerol kinase.